A 66-amino-acid polypeptide reads, in one-letter code: Toxin Cll1 (66 aa).

In terms of domain architecture, LCN-type CS-alpha/beta spans 1–66 (KEGYLVNKST…TYPLPNKSCS (66 aa)). Disulfide bonds link Cys12–Cys65, Cys16–Cys41, Cys25–Cys46, and Cys29–Cys48.

This sequence belongs to the long (4 C-C) scorpion toxin superfamily. Sodium channel inhibitor family. Beta subfamily. Expressed by the venom gland.

It localises to the secreted. Functionally, beta toxin that binds site-4 of sodium channels (Nav) and reduces peak current (observed on Nav1.1/SCN1A, Nav1.2/SCN2A, Nav1.3/SCN3A, Nav1.4/SCN5A, Nav1.5/SCN4A, and Nav1.6/SCN8A (IC(50)=44.9 nM)), shifts the voltage of activation toward more negative potentials (observed on Nav1.6, Nav1.1 (weak), Nav1.2 (weak), and Nav1.7 (weak)), and induces resurgent currents at negative voltages following brief and strong depolarizations (observed on Nav1.6, Nav1.1 (weak), Nav1.2 (weak), and Nav1.4 (weak)). This toxin is only active on crustaceans. The chain is Toxin Cll1 from Centruroides limpidus (Mexican scorpion).